Reading from the N-terminus, the 1747-residue chain is Retroelement silencing factor 1 (1747 aa).

A Glycyl lysine isopeptide (Lys-Gly) (interchain with G-Cter in SUMO2) cross-link involves residue Lys216. Ser221 bears the Phosphoserine mark. The span at 261–272 (TSAVPSQQYATQ) shows a compositional bias: polar residues. The interval 261–280 (TSAVPSQQYATQTDKRPPPP) is disordered. A Glycyl lysine isopeptide (Lys-Gly) (interchain with G-Cter in SUMO2) cross-link involves residue Lys707. Disordered stretches follow at residues 833–856 (PLTQKEKQNESTNGNSEVTPNVNQ), 923–956 (PQKPSLPNQQGIGSREPEKQLDNTTENKDFGFQK), and 1073–1101 (EGSVGQQTTYQTSEDQTADKTSSDSKDPA). Residues 842-856 (ESTNGNSEVTPNVNQ) are compositionally biased toward polar residues. Positions 937-956 (REPEKQLDNTTENKDFGFQK) are enriched in basic and acidic residues. Over residues 1073–1087 (EGSVGQQTTYQTSED) the composition is skewed to polar residues. Basic and acidic residues predominate over residues 1089–1101 (TADKTSSDSKDPA). Lys1136 participates in a covalent cross-link: Glycyl lysine isopeptide (Lys-Gly) (interchain with G-Cter in SUMO2). Ser1145 is modified (phosphoserine). The segment at 1200–1274 (EEKQKEQCSP…KSLPRTEQEL (75 aa)) is disordered. A compositionally biased stretch (basic and acidic residues) spans 1217 to 1226 (QGERTSDRDV). At Thr1240 the chain carries Phosphothreonine. The segment covering 1242-1261 (PDGKSHFPELQDDSRKDTPK) has biased composition (basic and acidic residues). Residue Ser1358 is modified to Phosphoserine. Residues Lys1528 and Lys1636 each participate in a glycyl lysine isopeptide (Lys-Gly) (interchain with G-Cter in SUMO2) cross-link. A disordered region spans residues 1686-1716 (KRTQKDSQERDNVNSRLSKRSFSADGFEMLQ). Residues 1689–1698 (QKDSQERDNV) show a composition bias toward basic and acidic residues. Phosphoserine is present on Ser1708. Residue Lys1723 forms a Glycyl lysine isopeptide (Lys-Gly) (interchain with G-Cter in SUMO2) linkage. Position 1740 is a phosphoserine (Ser1740).

In terms of assembly, interacts with SETDB1.

It is found in the nucleus. Its function is as follows. Plays a role in the regulation of imprinted gene expression, regulates repressive epigenetic modifications associated with SETDB1. Required for the recruitment or accumulation of SETDB1 to the endogenous retroviruses (ERVs) and maintenance of repressive chromatin configuration, contributing to a subset of the SETDB1-dependent ERV silencing in embryonic stem cells. The protein is Retroelement silencing factor 1 of Homo sapiens (Human).